Reading from the N-terminus, the 2159-residue chain is MEGEGHHGVVLACSICGFLFAVLSPFSFWVLWAVNWRPWRLYSWIYARKWPTYVQGPQLSTLCSLLTLCAWLVVISPIAVLLVWGSVLIALMERNIIGLAVIMAGVALLLSFYSIMLWWRTQWQSSEAVAYLLLLAVCLLCAYDFCAIYVTAGASASELNSPSGFFFGVSVISLAINMLFICKILFNVSGFDVDEYVRRSYKFAYSDCVEVAPVSCSPEPPDPSELYMTKSSRVKHLGLLYISSLLVLVGYSILYGLTSKEARWLGALTSVAVVILDWNLGLCSFRFELLKSRMIVLFVAGTSRAFLVSFGVHYWYLGHCISYAFVASVLLSAAVSSWLSISNPSVARIDALRSTVIKLREGFRRKGQNSSSNSSEGCGSSVKRSSGSVEAGQNGNAMDSMYRSNSQSDGVNWSSIPFDRSNSCQEGRSSDKNIDSARASLAHRSNSCLSAVQDSETAVVSVDRHGDPITSLVCSSSGLESHGCEPSGSATTSGNQQLLDLNLAAIFQDRLNDPRISSMLKKNGGLGDVELANLLQDKGLDPNFSYMLKDKVMDPRILALLQRSSLDADREHQDDVDVTATDSDRLDTTIANQISLSEELRRSGLEKWLNISRLIFHHLAGSPIRAFIVFTVMFIIETATVAIYRPETIKVINATHEQFEFGFSILLLSPVVCSIMAFIWSLRAEEMLMTSKPQKYGFIAWLLSTCVGLFLSFLSKSSVILGLSLTVPLMVACLSFAVPIWIRNGYSFWIPGREFANRENVSQAPGEKERALFVITIAVFTASIIGLGAIVSAKPLDALGYKGWDADKNSSYSPYATSMYLGWALSSTIAVITTGLIPIVAWFATYRFSPSSAICVGLFATVLVSFCGASYWGVVNSREDGVPLKADFLAALLPLLCIPAFFSLFTGLYKWKDDDWKISRGVYLFVGMGMLLLFGAVAAVIVTIRPWTVGVACLVAILFLVFVIGVIHYWTSNNFYLTRTQMLLVCSIAFLLALAAFLMGLFHGKPFVGASIGYFSFIFLLTGRALTVLLSPPIVVYSPRVLPVYVYDAHADSAKNVSYAFLILYGIALATEVWGVIASLIMNPPFVGAGVSATTLVIAFSFAVSRPCLTLKMMEDAVHFLSKDTVVQAMSRSANKTRNAISGTYSAPQRSASSAALLVGDPALTLDRAGNFVLPRADVMKLRDRLRNEEIAAGSFLCGVKDCLLICPQSLSNIDYRRNMCAHARILALEEAIDTEWVYMWDKFGGYLLLLLGLTAKAEQIQDEVRLRLFLDSIGLSDLSAKEIKKWMPEDRRQFELIQESYIREKEMEEEALMQRREEEGKGRERRRALLEREERKWKELEISLLSSIPNTGSRDAAAMAAAVRAVGGDSALEDSFARDRVSSIANHIRKAQLARRAEQTGIPGTICILDDEPRSTGRHCGELDLCLCQSQKVTLSIAVMVQPVSGPVCLFGSEFQKVCWEILVAGSEQGMEAGQVGLRLVTKGERMTTVAKEWNIGASSIADGRWHLVTVTLDADLGEATSFIDGVYDGYQNGLPLPTDNGIWEPGTDIWVGARPPMDLDAFGRSDSEGSDSKMQIMDAFLWGRCLSEDEVTVLHTAMSPAEYGFFDLAPGDAWHGSYSARVDDWESEEAYELYDQGDVEWDGQYSSGRKRPVHDAVAIDLDSFARRPRKPRFETRDEVNQRMLSVERAVRDALIAKGERNFTDQEFPPEDRSLFVDPMNPPLKLQVVSEWMRPSDIAKDISISCQPCLFSGSVNSSDVCQGRLGDCWFLSAVAVLTEMSRISEVIITPEYNDEGIYTVRFCIQGEWVAVVVDDWIPCESPGKPAFATSRKQNELWVSILEKAYAKLHGSYEALEGGLVQDALVDLTGGAGEEIDMRSPQAQLDLASGRLWSQLLHFKQEGFLLGAGSPSGSDAHISSSGIVQGHAYSILQVREVDGHKLIQIRNPWANEVEWNGPWSDSSPEWTERMKHKLMHVPQSKNGVFWMSWQDFQIHFRSIYVCRVYPPEMRYSVHGQWRGYNAGGCQDYDSWHQNPQYRLRVTGRDALYPVHVFITLTQGVGFSRKTNGFRNYQSSHDSSMFYIGMRILKTQGCRAAYNIYMHESAGGTDYVNSREISCELVLDPYPKGYTIVPTTIHPGEEAPFVLSVFSKASIRLEAV.

Residues 1–33 form the signal peptide; it reads MEGEGHHGVVLACSICGFLFAVLSPFSFWVLWA. Topologically, residues 34-70 are extracellular; that stretch reads VNWRPWRLYSWIYARKWPTYVQGPQLSTLCSLLTLCA. The helical transmembrane segment at 71 to 91 threads the bilayer; the sequence is WLVVISPIAVLLVWGSVLIAL. Residues 92-95 are Cytoplasmic-facing; sequence MERN. The chain crosses the membrane as a helical span at residues 96–116; it reads IIGLAVIMAGVALLLSFYSIM. Topologically, residues 117 to 127 are extracellular; the sequence is LWWRTQWQSSE. A helical transmembrane segment spans residues 128-148; sequence AVAYLLLLAVCLLCAYDFCAI. At 149 to 164 the chain is on the cytoplasmic side; the sequence is YVTAGASASELNSPSG. The chain crosses the membrane as a helical span at residues 165 to 185; it reads FFFGVSVISLAINMLFICKIL. Over 186–236 the chain is Extracellular; it reads FNVSGFDVDEYVRRSYKFAYSDCVEVAPVSCSPEPPDPSELYMTKSSRVKH. Residues 237–257 form a helical membrane-spanning segment; that stretch reads LGLLYISSLLVLVGYSILYGL. Residues 258-264 are Cytoplasmic-facing; sequence TSKEARW. A helical transmembrane segment spans residues 265–285; that stretch reads LGALTSVAVVILDWNLGLCSF. The Extracellular portion of the chain corresponds to 286 to 294; the sequence is RFELLKSRM. Residues 295–315 form a helical membrane-spanning segment; that stretch reads IVLFVAGTSRAFLVSFGVHYW. Residues 316-320 lie on the Cytoplasmic side of the membrane; the sequence is YLGHC. A helical membrane pass occupies residues 321–341; it reads ISYAFVASVLLSAAVSSWLSI. At 342-623 the chain is on the extracellular side; the sequence is SNPSVARIDA…LIFHHLAGSP (282 aa). Positions 365-409 are disordered; it reads RKGQNSSSNSSEGCGSSVKRSSGSVEAGQNGNAMDSMYRSNSQSD. Residues 369 to 381 show a composition bias toward low complexity; that stretch reads NSSSNSSEGCGSS. Polar residues predominate over residues 382–409; it reads VKRSSGSVEAGQNGNAMDSMYRSNSQSD. A helical membrane pass occupies residues 624–644; that stretch reads IRAFIVFTVMFIIETATVAIY. At 645 to 660 the chain is on the cytoplasmic side; the sequence is RPETIKVINATHEQFE. Residues 661-681 form a helical membrane-spanning segment; that stretch reads FGFSILLLSPVVCSIMAFIWS. Residues 682–694 are Extracellular-facing; it reads LRAEEMLMTSKPQ. Residues 695–715 form a helical membrane-spanning segment; sequence KYGFIAWLLSTCVGLFLSFLS. The Cytoplasmic portion of the chain corresponds to 716 to 719; that stretch reads KSSV. A helical transmembrane segment spans residues 720–740; it reads ILGLSLTVPLMVACLSFAVPI. The Extracellular segment spans residues 741–770; the sequence is WIRNGYSFWIPGREFANRENVSQAPGEKER. Residues 771–791 form a helical membrane-spanning segment; sequence ALFVITIAVFTASIIGLGAIV. Residues 792–822 are Cytoplasmic-facing; sequence SAKPLDALGYKGWDADKNSSYSPYATSMYLG. Residues 823–843 form a helical membrane-spanning segment; that stretch reads WALSSTIAVITTGLIPIVAWF. Over 844-853 the chain is Extracellular; sequence ATYRFSPSSA. Residues 854–874 form a helical membrane-spanning segment; it reads ICVGLFATVLVSFCGASYWGV. The Cytoplasmic portion of the chain corresponds to 875 to 887; the sequence is VNSREDGVPLKAD. Residues 888-908 traverse the membrane as a helical segment; the sequence is FLAALLPLLCIPAFFSLFTGL. Residues 909 to 921 lie on the Extracellular side of the membrane; it reads YKWKDDDWKISRG. A helical membrane pass occupies residues 922-942; sequence VYLFVGMGMLLLFGAVAAVIV. At 943–946 the chain is on the cytoplasmic side; that stretch reads TIRP. Residues 947–967 form a helical membrane-spanning segment; that stretch reads WTVGVACLVAILFLVFVIGVI. The Extracellular segment spans residues 968–981; it reads HYWTSNNFYLTRTQ. Residues 982–1002 traverse the membrane as a helical segment; that stretch reads MLLVCSIAFLLALAAFLMGLF. The Cytoplasmic portion of the chain corresponds to 1003 to 1016; the sequence is HGKPFVGASIGYFS. A helical membrane pass occupies residues 1017–1037; sequence FIFLLTGRALTVLLSPPIVVY. At 1038–1060 the chain is on the extracellular side; that stretch reads SPRVLPVYVYDAHADSAKNVSYA. The helical transmembrane segment at 1061-1081 threads the bilayer; the sequence is FLILYGIALATEVWGVIASLI. At 1082 to 2159 the chain is on the cytoplasmic side; the sequence is MNPPFVGAGV…SKASIRLEAV (1078 aa). A phosphoserine mark is found at Ser-1371 and Ser-1376. The region spanning 1417-1609 is the Calpain catalytic 1 domain; the sequence is TGRHCGELDL…MSPAEYGFFD (193 aa). Ser-1665 is modified (phosphoserine). Residues 1703 to 2005 enclose the Calpain catalytic 2 domain; sequence NFTDQEFPPE…FRSIYVCRVY (303 aa). Catalysis depends on residues Cys-1769, His-1927, and Asn-1947.

The protein belongs to the peptidase C2 family. Post-translationally, autocatalytic proteolytic cleavage leading to the production of mainly cytoplasmic localized subproducts of about 85 and 120 kDa. As to expression, expressed in most tissues at low levels ranging from 30 to 55 ppm. Present in all endosperm cells at transcript level, but confined to aleurones at protein level.

Its subcellular location is the endoplasmic reticulum membrane. It is found in the cytoplasm. The protein resides in the cell membrane. It localises to the endosome membrane. Its function is as follows. Essential protease involved in epiderm development. Required for aleurone cell development in the endosperm probably by maintaining and restricting the aleurone and embryonic epidermal L1 cell-layer fates as well as meristems organization. Involved in the maintenance of adaxial/abaxial axis information in developing leaves, probably by regulating cell proliferation and expansion. Does not need calcium ions to be active. The sequence is that of Calpain-type cysteine protease DEK1 (DEK1) from Zea mays (Maize).